The chain runs to 199 residues: Recombination protein RecR (199 aa).

The C4-type zinc finger occupies 58–73; that stretch reads CRRCFNLTEGEECDIC. A Toprim domain is found at 81–176; the sequence is SVICVVEDPY…RVTALASGLP (96 aa).

It belongs to the RecR family.

Functionally, may play a role in DNA repair. It seems to be involved in an RecBC-independent recombinational process of DNA repair. It may act with RecF and RecO. This chain is Recombination protein RecR, found in Rubrobacter xylanophilus (strain DSM 9941 / JCM 11954 / NBRC 16129 / PRD-1).